An 86-amino-acid polypeptide reads, in one-letter code: Large ribosomal subunit protein bL27 (86 aa).

The span at 1–10 shows a compositional bias: gly residues; that stretch reads MAQKKGGGST. Residues 1-20 are disordered; sequence MAQKKGGGSTRNGRDSESKR.

It belongs to the bacterial ribosomal protein bL27 family.

This Bordetella parapertussis (strain 12822 / ATCC BAA-587 / NCTC 13253) protein is Large ribosomal subunit protein bL27.